Reading from the N-terminus, the 126-residue chain is NADPH-dependent 7-cyano-7-deazaguanine reductase (126 aa).

The active-site Thioimide intermediate is C40. D47 acts as the Proton donor in catalysis. Substrate is bound by residues I62–L64 and H81–E82.

It belongs to the GTP cyclohydrolase I family. QueF type 1 subfamily.

It is found in the cytoplasm. It catalyses the reaction 7-aminomethyl-7-carbaguanine + 2 NADP(+) = 7-cyano-7-deazaguanine + 2 NADPH + 3 H(+). Its pathway is tRNA modification; tRNA-queuosine biosynthesis. Catalyzes the NADPH-dependent reduction of 7-cyano-7-deazaguanine (preQ0) to 7-aminomethyl-7-deazaguanine (preQ1). The protein is NADPH-dependent 7-cyano-7-deazaguanine reductase of Campylobacter jejuni subsp. doylei (strain ATCC BAA-1458 / RM4099 / 269.97).